The chain runs to 149 residues: Transcriptional repressor NrdR (149 aa).

Residues 3–34 (CPFCSHLETQVIETRVFEDAASIRRRRQCAAC) fold into a zinc finger. In terms of domain architecture, ATP-cone spans 49–139 (PAVVKKDGRR…VYRSFEGIDD (91 aa)).

This sequence belongs to the NrdR family. It depends on Zn(2+) as a cofactor.

Functionally, negatively regulates transcription of bacterial ribonucleotide reductase nrd genes and operons by binding to NrdR-boxes. The polypeptide is Transcriptional repressor NrdR (Verminephrobacter eiseniae (strain EF01-2)).